The following is a 156-amino-acid chain: 6,7-dimethyl-8-ribityllumazine synthase (156 aa).

5-amino-6-(D-ribitylamino)uracil is bound by residues Phe-24, Ala-58–Glu-60, and Val-82–Ile-84. Ser-87 to Thr-88 serves as a coordination point for (2S)-2-hydroxy-3-oxobutyl phosphate. Catalysis depends on His-90, which acts as the Proton donor. Phe-115 contacts 5-amino-6-(D-ribitylamino)uracil. A (2S)-2-hydroxy-3-oxobutyl phosphate-binding site is contributed by Arg-129.

This sequence belongs to the DMRL synthase family.

The catalysed reaction is (2S)-2-hydroxy-3-oxobutyl phosphate + 5-amino-6-(D-ribitylamino)uracil = 6,7-dimethyl-8-(1-D-ribityl)lumazine + phosphate + 2 H2O + H(+). The protein operates within cofactor biosynthesis; riboflavin biosynthesis; riboflavin from 2-hydroxy-3-oxobutyl phosphate and 5-amino-6-(D-ribitylamino)uracil: step 1/2. Its function is as follows. Catalyzes the formation of 6,7-dimethyl-8-ribityllumazine by condensation of 5-amino-6-(D-ribitylamino)uracil with 3,4-dihydroxy-2-butanone 4-phosphate. This is the penultimate step in the biosynthesis of riboflavin. The protein is 6,7-dimethyl-8-ribityllumazine synthase of Chlorobaculum parvum (strain DSM 263 / NCIMB 8327) (Chlorobium vibrioforme subsp. thiosulfatophilum).